The chain runs to 449 residues: UDP-N-acetylmuramoyl-tripeptide--D-alanyl-D-alanine ligase (449 aa).

106 to 112 (GSVGKTS) is an ATP binding site.

It belongs to the MurCDEF family. MurF subfamily.

It is found in the cytoplasm. The catalysed reaction is D-alanyl-D-alanine + UDP-N-acetyl-alpha-D-muramoyl-L-alanyl-gamma-D-glutamyl-meso-2,6-diaminopimelate + ATP = UDP-N-acetyl-alpha-D-muramoyl-L-alanyl-gamma-D-glutamyl-meso-2,6-diaminopimeloyl-D-alanyl-D-alanine + ADP + phosphate + H(+). It functions in the pathway cell wall biogenesis; peptidoglycan biosynthesis. Its function is as follows. Involved in cell wall formation. Catalyzes the final step in the synthesis of UDP-N-acetylmuramoyl-pentapeptide, the precursor of murein. The polypeptide is UDP-N-acetylmuramoyl-tripeptide--D-alanyl-D-alanine ligase (Rickettsia prowazekii (strain Madrid E)).